Here is a 493-residue protein sequence, read N- to C-terminus: Stage V sporulation protein AF (493 aa).

Transmembrane regions (helical) follow at residues 296 to 316 (FFGILASTLFLPIWFLFVLQP), 334 to 354 (IPIILQIFLADLGIEFLRMAA), 363 to 383 (TAMGLIAAVLIGQIAIEVGLF), 387 to 407 (VILYVSLAAIGTFTTPSYELS), and 418 to 438 (MILVALFHIKGLVIGFTVLII).

This sequence belongs to the GerABKA family.

The protein resides in the cell membrane. The sequence is that of Stage V sporulation protein AF (spoVAF) from Bacillus subtilis (strain 168).